The following is a 564-amino-acid chain: Urocanate hydratase (564 aa).

NAD(+) is bound by residues 58–59, glutamine 136, 182–184, glutamate 202, arginine 207, 248–249, 269–273, 279–280, and tyrosine 328; these read GG, GMG, NA, QTSAH, and YL. Cysteine 416 is an active-site residue. Glycine 498 contacts NAD(+).

This sequence belongs to the urocanase family. The cofactor is NAD(+).

It localises to the cytoplasm. The catalysed reaction is 4-imidazolone-5-propanoate = trans-urocanate + H2O. It participates in amino-acid degradation; L-histidine degradation into L-glutamate; N-formimidoyl-L-glutamate from L-histidine: step 2/3. Functionally, catalyzes the conversion of urocanate to 4-imidazolone-5-propionate. This Aliivibrio salmonicida (strain LFI1238) (Vibrio salmonicida (strain LFI1238)) protein is Urocanate hydratase.